Reading from the N-terminus, the 32-residue chain is Cruzioseptin-9 (32 aa).

Gln-29 is subject to Glutamine amide. Residues 31–32 (EQ) constitute a propeptide that is removed on maturation.

As to expression, expressed by the skin glands.

The protein resides in the secreted. In terms of biological role, has antimicrobial activity. This Cruziohyla calcarifer (Splendid leaf frog) protein is Cruzioseptin-9.